The following is a 423-amino-acid chain: Glucose-6-phosphate isomerase (423 aa).

Glutamate 279 serves as the catalytic Proton donor. Active-site residues include histidine 300 and lysine 413.

Belongs to the GPI family.

It is found in the cytoplasm. The enzyme catalyses alpha-D-glucose 6-phosphate = beta-D-fructose 6-phosphate. It participates in carbohydrate biosynthesis; gluconeogenesis. It functions in the pathway carbohydrate degradation; glycolysis; D-glyceraldehyde 3-phosphate and glycerone phosphate from D-glucose: step 2/4. Functionally, catalyzes the reversible isomerization of glucose-6-phosphate to fructose-6-phosphate. This is Glucose-6-phosphate isomerase from Acholeplasma laidlawii (strain PG-8A).